The sequence spans 40 residues: Small polypeptide DEVIL 3 (40 aa).

The interval 9–40 (PCNKKLGGYLKEQKGRLYIIRRCVVMLICWHD) is required for DVL/RTFL small polypeptide activity. Residues 12–28 (KKLGGYLKEQKGRLYII) form a helical membrane-spanning segment.

It belongs to the DVL/RTFL small polypeptides family. In terms of tissue distribution, mostly expressed in flowers and stems, and, to a lower extent, in roots and leaves.

The protein resides in the cell membrane. Its function is as follows. Small polypeptide acting as a regulatory molecule which coordinates cellular responses required for differentiation, growth and development, including leaves shape, pedicule elongation, inflorescence organization and fruit maturation, probably by restricting polar cell proliferation in lateral organs and coordinating socket cell recruitment and differentiation at trichome sites. This Arabidopsis thaliana (Mouse-ear cress) protein is Small polypeptide DEVIL 3.